We begin with the raw amino-acid sequence, 277 residues long: MQGGGGGDSSGGGGGEAPRPSRYESQKRRDWHTFGQYLRNHRPPLELSRCSGAHVLEFLRYLDQFGKTKVHAAGCPFFGHPSPPAPCPCPLRQAWGSLDALVGRLRAAFEEHGGRPEANPFGARAVRLYLREVRDSQAKARGIAYEKKRRKRPPTSSSSSQAAAAAAAATSPASPAASPTPPPPPPTERSADVRPMPPEGHFFIPHPHFMHGHFLVPGGDADHHHQVSNAGNGGNTNTNTNTNTGGGGGNGDEMAVAMAAVAEAHAAGCMLPLSVFN.

Residues 1-16 (MQGGGGGDSSGGGGGE) show a composition bias toward gly residues. Disordered regions lie at residues 1–28 (MQGGGGGDSSGGGGGEAPRPSRYESQKR), 141–203 (RGIA…GHFF), and 225–245 (HQVSNAGNGGNTNTNTNTNTG). The span at 19–28 (RPSRYESQKR) shows a compositional bias: basic and acidic residues. Residues 22-149 (RYESQKRRDW…ARGIAYEKKR (128 aa)) enclose the ALOG domain. Residues 147–151 (KKRRK) carry the Nuclear localization signal motif. Positions 154 to 177 (PTSSSSSQAAAAAAAATSPASPAA) are enriched in low complexity. Residues 178-187 (SPTPPPPPPT) show a composition bias toward pro residues.

Belongs to the plant homeotic and developmental regulators ALOG protein family.

The protein localises to the nucleus. Probable transcription regulator that acts as a developmental regulator by promoting cell growth in response to light. The sequence is that of Protein G1-like2 (G1L2) from Oryza sativa subsp. japonica (Rice).